Consider the following 202-residue polypeptide: V-type ATP synthase subunit D (202 aa).

This sequence belongs to the V-ATPase D subunit family.

Functionally, produces ATP from ADP in the presence of a proton gradient across the membrane. The polypeptide is V-type ATP synthase subunit D (atpD) (Borreliella burgdorferi (strain ATCC 35210 / DSM 4680 / CIP 102532 / B31) (Borrelia burgdorferi)).